The following is a 222-amino-acid chain: Small ribosomal subunit protein uS3 (222 aa).

The region spanning 39–109 (IRNFVKKKVY…NILINIVEVK (71 aa)) is the KH type-2 domain.

The protein belongs to the universal ribosomal protein uS3 family. As to quaternary structure, part of the 30S ribosomal subunit. Forms a tight complex with proteins S10 and S14.

Functionally, binds the lower part of the 30S subunit head. Binds mRNA in the 70S ribosome, positioning it for translation. This is Small ribosomal subunit protein uS3 from Clostridium tetani (strain Massachusetts / E88).